Here is a 571-residue protein sequence, read N- to C-terminus: Protein EARLY STARVATION 1, chloroplastic (571 aa).

Disordered stretches follow at residues 142-162 (RHSS…KDAG) and 215-254 (GSYR…TEHD). Low complexity predominate over residues 145-155 (SCSSQSLPQQQ).

Belongs to the ESV1 family.

The protein localises to the plastid. It localises to the chloroplast stroma. Its function is as follows. Binds preferentially to highly ordered alpha-glucans, such as starch and crystalline maltodextrins. Involved in the organization of the starch granule matrix, thus influencing starch turnover by modulating the accessibility of starch polymers to modifying and degrading enzymes. Required for the control of starch degradation in leaves and starch distribution in nonphotosynthetic parts. Promotes gravitropic responses, negative in shoots but positive in roots, by facilitating starch granules (statoliths) formation in hypocotyls and roots columella. The chain is Protein EARLY STARVATION 1, chloroplastic from Marchantia polymorpha (Common liverwort).